We begin with the raw amino-acid sequence, 174 residues long: NADH-quinone oxidoreductase subunit I (174 aa).

2 4Fe-4S ferredoxin-type domains span residues 44 to 74 (LNRY…VEGD) and 90 to 119 (RVYQ…MTND). Residues Cys-54, Cys-57, Cys-60, Cys-64, Cys-99, Cys-102, Cys-105, and Cys-109 each contribute to the [4Fe-4S] cluster site.

Belongs to the complex I 23 kDa subunit family. In terms of assembly, NDH-1 is composed of 14 different subunits. Subunits NuoA, H, J, K, L, M, N constitute the membrane sector of the complex. [4Fe-4S] cluster is required as a cofactor.

The protein localises to the cell membrane. The enzyme catalyses a quinone + NADH + 5 H(+)(in) = a quinol + NAD(+) + 4 H(+)(out). Its function is as follows. NDH-1 shuttles electrons from NADH, via FMN and iron-sulfur (Fe-S) centers, to quinones in the respiratory chain. The immediate electron acceptor for the enzyme in this species is believed to be menaquinone. Couples the redox reaction to proton translocation (for every two electrons transferred, four hydrogen ions are translocated across the cytoplasmic membrane), and thus conserves the redox energy in a proton gradient. The sequence is that of NADH-quinone oxidoreductase subunit I from Mycobacterium sp. (strain KMS).